The following is a 366-amino-acid chain: Acetylserotonin O-methyltransferase 2 (366 aa).

Residues G209, D232, D253, and K267 each contribute to the S-adenosyl-L-homocysteine site. The Proton acceptor role is filled by H271. Catalysis depends on residues E302 and E332.

The protein belongs to the class I-like SAM-binding methyltransferase superfamily. Cation-independent O-methyltransferase family. Homodimer. Expressed in roots, leaves, stems and flowers.

The protein localises to the cytoplasm. The catalysed reaction is N-acetylserotonin + S-adenosyl-L-methionine = melatonin + S-adenosyl-L-homocysteine + H(+). The protein operates within aromatic compound metabolism; melatonin biosynthesis; melatonin from serotonin: step 1/2. Methyltransferase which catalyzes the transfer of a methyl group onto N-acetylserotonin, producing melatonin (N-acetyl-5-methoxytryptamine). This is Acetylserotonin O-methyltransferase 2 from Oryza sativa subsp. japonica (Rice).